The following is a 322-amino-acid chain: Anthranilate phosphoribosyltransferase (322 aa).

5-phospho-alpha-D-ribose 1-diphosphate contacts are provided by residues G71, 74–75 (GD), T79, 81–84 (NVST), 99–107 (KFGNRSASG), and A111. An anthranilate-binding site is contributed by G71. S83 is a binding site for Mg(2+). N102 contributes to the anthranilate binding site. R157 is a binding site for anthranilate. D215 and E216 together coordinate Mg(2+).

It belongs to the anthranilate phosphoribosyltransferase family. In terms of assembly, homodimer. Mg(2+) serves as cofactor.

It carries out the reaction N-(5-phospho-beta-D-ribosyl)anthranilate + diphosphate = 5-phospho-alpha-D-ribose 1-diphosphate + anthranilate. It participates in amino-acid biosynthesis; L-tryptophan biosynthesis; L-tryptophan from chorismate: step 2/5. Catalyzes the transfer of the phosphoribosyl group of 5-phosphorylribose-1-pyrophosphate (PRPP) to anthranilate to yield N-(5'-phosphoribosyl)-anthranilate (PRA). This Thermoplasma acidophilum (strain ATCC 25905 / DSM 1728 / JCM 9062 / NBRC 15155 / AMRC-C165) protein is Anthranilate phosphoribosyltransferase.